Reading from the N-terminus, the 199-residue chain is Recombination protein RecR (199 aa).

Residues C56–C71 form a C4-type zinc finger. In terms of domain architecture, Toprim spans S79–P174.

The protein belongs to the RecR family.

Functionally, may play a role in DNA repair. It seems to be involved in an RecBC-independent recombinational process of DNA repair. It may act with RecF and RecO. The sequence is that of Recombination protein RecR from Streptomyces avermitilis (strain ATCC 31267 / DSM 46492 / JCM 5070 / NBRC 14893 / NCIMB 12804 / NRRL 8165 / MA-4680).